Reading from the N-terminus, the 433-residue chain is MEFNANRVDEANAVITATLTKDSIENNLEKVAKQAAKTMNVQGFRKGKVPVAVVKQRYADKLREDAEADGIRKILADGLKLLDIKNSDLIGEPSVTKFDKKDNGDIEVELSVACKPNIDLGDYKSLVPAVKAIEIDIKKIDDRLTEIAQSSAPLEKIARKRAVKDGDFAVIDFEGFVDGVAFDGGKAEKYPLQIGSGSFIPGFEEQVIGMKYEEQKDITVKFPESYQAKDLAGKEAVFKVTLHEIQERAKPELNDEFAQKMLPGQKDVTIDTLRDRVKEQMLAEDKAKYYRDELKPVFLETLVEKINFALPTSVIEQEINYALNNKIRTMTEEEINELKENANKVEDIRNELKEDAVNSVKATFIIDALAKAENVQVSDQEVTQVLYFEAMQMGQNPQDVIKQYQQAGYLPAIKMSMIEEKVISKLLDEKLGK.

Residues 166-251 (GDFAVIDFEG…LHEIQERAKP (86 aa)) enclose the PPIase FKBP-type domain.

It belongs to the FKBP-type PPIase family. Tig subfamily.

The protein resides in the cytoplasm. It carries out the reaction [protein]-peptidylproline (omega=180) = [protein]-peptidylproline (omega=0). Involved in protein export. Acts as a chaperone by maintaining the newly synthesized protein in an open conformation. Functions as a peptidyl-prolyl cis-trans isomerase. The polypeptide is Trigger factor (Aliarcobacter butzleri (strain RM4018) (Arcobacter butzleri)).